The following is a 544-amino-acid chain: Chaperonin GroEL (544 aa).

Residues 30-33 (TLGP), lysine 51, 87-91 (DGTTT), glycine 415, 481-483 (DAL), and aspartate 497 each bind ATP.

It belongs to the chaperonin (HSP60) family. As to quaternary structure, forms a cylinder of 14 subunits composed of two heptameric rings stacked back-to-back. Interacts with the co-chaperonin GroES.

Its subcellular location is the cytoplasm. The enzyme catalyses ATP + H2O + a folded polypeptide = ADP + phosphate + an unfolded polypeptide.. Together with its co-chaperonin GroES, plays an essential role in assisting protein folding. The GroEL-GroES system forms a nano-cage that allows encapsulation of the non-native substrate proteins and provides a physical environment optimized to promote and accelerate protein folding. The protein is Chaperonin GroEL of Chlamydia muridarum (strain MoPn / Nigg).